We begin with the raw amino-acid sequence, 380 residues long: Cytochrome b (380 aa).

Helical transmembrane passes span phenylalanine 34–methionine 54, tryptophan 78–isoleucine 99, tryptophan 114–leucine 134, and phenylalanine 179–leucine 199. 2 residues coordinate heme b: histidine 84 and histidine 98. Heme b contacts are provided by histidine 183 and histidine 197. Histidine 202 contributes to the a ubiquinone binding site. 4 helical membrane passes run phenylalanine 227–alanine 247, leucine 289–histidine 309, alanine 321–glycine 341, and phenylalanine 348–proline 368.

The protein belongs to the cytochrome b family. As to quaternary structure, the cytochrome bc1 complex contains 3 respiratory subunits (MT-CYB, CYC1 and UQCRFS1), 2 core proteins (UQCRC1 and UQCRC2) and probably 6 low-molecular weight proteins. It depends on heme b as a cofactor.

The protein localises to the mitochondrion inner membrane. Functionally, component of the ubiquinol-cytochrome c reductase complex (complex III or cytochrome b-c1 complex) that is part of the mitochondrial respiratory chain. The b-c1 complex mediates electron transfer from ubiquinol to cytochrome c. Contributes to the generation of a proton gradient across the mitochondrial membrane that is then used for ATP synthesis. The sequence is that of Cytochrome b (mt-cyb) from Rana dybowskii (Dybovsky's frog).